The sequence spans 388 residues: Biotin synthase (388 aa).

Positions 47 to 277 constitute a Radical SAM core domain; it reads WFGRRVKLNY…DVEVRIAGGR (231 aa). Residues cysteine 65, cysteine 69, and cysteine 72 each contribute to the [4Fe-4S] cluster site. The [2Fe-2S] cluster site is built by cysteine 109, cysteine 142, cysteine 202, and arginine 272. Residues 335 to 371 are disordered; it reads APAGGCGSEQSAGCGSHEGGGACGSAPAPRTDEARTD.

Belongs to the radical SAM superfamily. Biotin synthase family. Homodimer. It depends on [4Fe-4S] cluster as a cofactor. The cofactor is [2Fe-2S] cluster.

The enzyme catalyses (4R,5S)-dethiobiotin + (sulfur carrier)-SH + 2 reduced [2Fe-2S]-[ferredoxin] + 2 S-adenosyl-L-methionine = (sulfur carrier)-H + biotin + 2 5'-deoxyadenosine + 2 L-methionine + 2 oxidized [2Fe-2S]-[ferredoxin]. It functions in the pathway cofactor biosynthesis; biotin biosynthesis; biotin from 7,8-diaminononanoate: step 2/2. Catalyzes the conversion of dethiobiotin (DTB) to biotin by the insertion of a sulfur atom into dethiobiotin via a radical-based mechanism. The polypeptide is Biotin synthase (Streptomyces avermitilis (strain ATCC 31267 / DSM 46492 / JCM 5070 / NBRC 14893 / NCIMB 12804 / NRRL 8165 / MA-4680)).